Consider the following 573-residue polypeptide: MHFSTSTSTIGVVAAVLLAALILLYRAALPKPIHGIPYKKGSEKRLLGDAPDLLKWRNETQEVFSYMRKLAKDLNSPVFQLFMRPMGKPWVVITDFREAYDICTNRREEFDRSAFTGEVFGPIVPNSHIQFATDDLWRSHRQLLRDTMSPMFVASVIGPIIHKSASGLVSLWRTKARLANGQPFDAEQDLARCLVDLIVSSSFGYDVKSLKAHEDSLSQKVVKGPKDVPMEFTAGEDTEACTSLITLASGVGMAIRSPFPKIVLPLALRFLPSFASAQRYTHNMISEQAGAAWNKFSKAVNVSRDEQVTSAMDLLVLREEQMARKEGRESRLDLPVVRDELLAFLFAGQETTGSTIGWSLKYLAMNQDIQKKLREELRAAHKRAAQTPGASPTSQEIVDTHIPYVEAFIAENHRFAVTISCMIRHTIKDAVVLGHVIPKGSDIFCLTNGPSYQSPSAPVDESVRSKSSQAAKDKFGVWDETNVGEFKPERWLEKQPNGELRFNRFAGPSNPFGVGPRACFGIKWADLIIKTMVTQIVWNFDIQETPEDLSGIEASDGASHRAQKTFVRLVALQ.

Residues 10–30 (IGVVAAVLLAALILLYRAALP) form a helical membrane-spanning segment. Cys-519 is a binding site for heme.

The protein belongs to the cytochrome P450 family. Requires heme as cofactor.

It is found in the membrane. Its pathway is secondary metabolite biosynthesis. Its function is as follows. Cytochrome P450 monooxygenase; part of the gene cluster that mediates the biosynthesis of dibenzodioxocinones such as pestalotiollide B, a novel class of inhibitors against cholesterol ester transfer protein (CEPT). The biosynthesis initiates from condensation of acetate and malonate units catalyzed by the non-reducing PKS pks8/GME11356. Pks8/GME11356 lacks a thioesterase (TE) domain, which is important to the cyclizing of the third ring of atrochrysone carboxylic acid, and the esterase GME11355 might play the role of TE and catalyzes the cyclization reaction of the C ring. The lactamase-like protein GME11357 (or other beta-lactamases in Pestalotiopsis microspora) probably hydrolyzes the thioester bond between the ACP of pks8/GME11356 and the intermediate to release atrochrysone carboxylic acid, which is spontaneously dehydrates to form endocrocin anthrone. Endocrocin anthrone is further converted to emodin via the endocrocin intermediate. Emodin is then oxidized by several enzymes such as the Baeyer-Villiger oxidase GME11358, the oxidoreductase GME11367, the short chain dehydrogenase/reductase GME11373, as well as by other oxidoreductases from the cluster, to modify the A and C rings and open the B ring, and finally yield monodictyphenone. The prenyltransferase GME11375 may catalyze the addition reaction between the C5 side chains and the carbon bone of dibenzodioxocinones. The remaining biochemical reactions to the final product dibenzodioxocinones should be methylation catalyzed by methyltransferase GME11366 and reduction and lactonization reaction catalyzed by a series of oxidordeuctases. The sequence is that of Cytochrome P450 monooxygenase GME11363 from Pestalotiopsis microspora.